The chain runs to 124 residues: Orexigenic neuropeptide QRFP (124 aa).

The signal sequence occupies residues 1–17 (MRGFRPLLSLLLPLSAC). The propeptide occupies 18–79 (FPLLDRRGPT…REHTGFRLGR (62 aa)). A disordered region spans residues 63–101 (REQQASHREHTGFRLGRQDGSSEAAGFLPADSEKASGPL). A Phenylalanine amide modification is found at phenylalanine 122.

It belongs to the RFamide neuropeptide family. In terms of assembly, ligand for the G-protein coupled receptor QRFPR/GPR103. Expressed in the brain with highest levels in the periventricular hypothalamic nucleus and lateral hypothalamic areas. Expressed at moderate levels in the adrenal gland, eye, heart, intestine, liver, lung, kidney, mesenteric lymph node, ovary, placenta, Peyer patches, skin, spleen, stomach, testis, thymus and uterus.

It localises to the secreted. Functionally, stimulates feeding and grooming behavior, metabolic rate and locomotor activity and increases blood pressure. May have orexigenic activity. May promote aldosterone secretion by the adrenal gland. In Mus musculus (Mouse), this protein is Orexigenic neuropeptide QRFP.